We begin with the raw amino-acid sequence, 500 residues long: Cytochrome P450 monooxygenase hepD (500 aa).

A helical transmembrane segment spans residues 15 to 35 (WILLSLSLAFIVVYSLFYLAV). Asn99, Asn185, Asn373, and Asn409 each carry an N-linked (GlcNAc...) asparagine glycan. Cys445 provides a ligand contact to heme. N-linked (GlcNAc...) asparagine glycosylation is present at Asn482.

Belongs to the cytochrome P450 family. It depends on heme as a cofactor.

Its subcellular location is the membrane. The protein operates within secondary metabolite biosynthesis. Functionally, cytochrome P450 monooxygenase; part of the gene cluster that mediates the biosynthesis of heptelidic acid (HA), a sesquiterpene lactone that acts as an inhibitor of glyceraldehyde-3-phosphatedehydrogenase (GAPDH) and a growth inhibitor of the salt-tolerant lactic acid bacteria in soy sauce brewing. This is Cytochrome P450 monooxygenase hepD from Aspergillus oryzae (strain ATCC 42149 / RIB 40) (Yellow koji mold).